The sequence spans 387 residues: Phosphoglycerate kinase (387 aa).

Residues aspartate 21–asparagine 23, arginine 36, histidine 59–arginine 62, arginine 113, and arginine 146 each bind substrate. ATP-binding positions include lysine 197, glutamate 314, and glycine 340–threonine 343.

The protein belongs to the phosphoglycerate kinase family. As to quaternary structure, monomer.

The protein resides in the cytoplasm. The catalysed reaction is (2R)-3-phosphoglycerate + ATP = (2R)-3-phospho-glyceroyl phosphate + ADP. The protein operates within carbohydrate degradation; glycolysis; pyruvate from D-glyceraldehyde 3-phosphate: step 2/5. The protein is Phosphoglycerate kinase of Pseudomonas putida (strain W619).